The sequence spans 209 residues: Uracil phosphoribosyltransferase (209 aa).

Residues Arg79, Arg104, and 131–139 (DPMLATGGS) contribute to the 5-phospho-alpha-D-ribose 1-diphosphate site. Residues Ile194 and 199 to 201 (GDA) contribute to the uracil site. Asp200 serves as a coordination point for 5-phospho-alpha-D-ribose 1-diphosphate.

The protein belongs to the UPRTase family. Mg(2+) serves as cofactor.

The enzyme catalyses UMP + diphosphate = 5-phospho-alpha-D-ribose 1-diphosphate + uracil. It functions in the pathway pyrimidine metabolism; UMP biosynthesis via salvage pathway; UMP from uracil: step 1/1. Allosterically activated by GTP. Functionally, catalyzes the conversion of uracil and 5-phospho-alpha-D-ribose 1-diphosphate (PRPP) to UMP and diphosphate. The sequence is that of Uracil phosphoribosyltransferase from Natranaerobius thermophilus (strain ATCC BAA-1301 / DSM 18059 / JW/NM-WN-LF).